Consider the following 215-residue polypeptide: Pyrrolidone-carboxylate peptidase (215 aa).

Catalysis depends on residues Glu81, Cys144, and His168.

Belongs to the peptidase C15 family. As to quaternary structure, homotetramer.

It is found in the cytoplasm. The enzyme catalyses Release of an N-terminal pyroglutamyl group from a polypeptide, the second amino acid generally not being Pro.. In terms of biological role, removes 5-oxoproline from various penultimate amino acid residues except L-proline. The chain is Pyrrolidone-carboxylate peptidase from Bacillus licheniformis (strain ATCC 14580 / DSM 13 / JCM 2505 / CCUG 7422 / NBRC 12200 / NCIMB 9375 / NCTC 10341 / NRRL NRS-1264 / Gibson 46).